Consider the following 464-residue polypeptide: Splicing factor 3A subunit 2 (464 aa).

At M1 the chain carries N-acetylmethionine. The disordered stretch occupies residues 1–27 (MDFQHRPGGKTGSGGVASSSESNRDRR). An N6-acetyllysine modification is found at K10. A Matrin-type zinc finger spans residues 54–84 (YECKLCLTLHNNEGSYLAHTQGKKHQTNLAR). The residue at position 153 (S153) is a Phosphoserine. Pro residues-rich tracts occupy residues 217-295 (PPAP…PVVH), 303-323 (PPAP…PGVH), and 331-369 (PPAP…PPPS). The tract at residues 217–464 (PPAPPSLPAG…GNIPPPPPTN (248 aa)) is disordered. Residues 370–392 (AGVHPQAPGVHPAAPAVHPQAPG) show a composition bias toward low complexity. Over residues 435–464 (VHPPTPMPPMLRPPLPSEGPGNIPPPPPTN) the composition is skewed to pro residues.

The protein belongs to the SF3A2 family. As to quaternary structure, component of the 17S U2 SnRNP complex, a ribonucleoprotein complex that contains small nuclear RNA (snRNA) U2 and a number of specific proteins. Part of the SF3A subcomplex of the 17S U2 SnRNP complex which is composed of three subunits; SF3A3/SAP61, SF3A2/SAP62 and SF3A1/SAP114. SF3A associates with the splicing factor SF3B and a 12S RNA unit to form the mature 17S U2 small nuclear ribonucleoprotein complex (17S U2 snRNP). Identified in the spliceosome 'E' complex, a precursor of the spliceosome 'A' complex. Identified in the spliceosome 'A' and 'B' complexes. Identified in the spliceosome 'C' complex. Interacts with HTATSF1.

It is found in the nucleus. In terms of biological role, component of the 17S U2 SnRNP complex of the spliceosome, a large ribonucleoprotein complex that removes introns from transcribed pre-mRNAs. The 17S U2 SnRNP complex (1) directly participates in early spliceosome assembly and (2) mediates recognition of the intron branch site during pre-mRNA splicing by promoting the selection of the pre-mRNA branch-site adenosine, the nucleophile for the first step of splicing. Within the 17S U2 SnRNP complex, SF3A2 is part of the SF3A subcomplex that contributes to the assembly of the 17S U2 snRNP, and the subsequent assembly of the pre-spliceosome 'E' complex and the pre-catalytic spliceosome 'A' complex. Involved in pre-mRNA splicing as a component of pre-catalytic spliceosome 'B' complexes, including the Bact complex. Interacts directly with the duplex formed by U2 snRNA and the intron. This chain is Splicing factor 3A subunit 2 (SF3A2), found in Homo sapiens (Human).